Here is a 503-residue protein sequence, read N- to C-terminus: Lithocholate 6-beta-hydroxylase (503 aa).

Cys442 serves as a coordination point for heme.

This sequence belongs to the cytochrome P450 family. The cofactor is heme.

It localises to the endoplasmic reticulum membrane. It is found in the microsome membrane. It carries out the reaction lithocholate + reduced [NADPH--hemoprotein reductase] + O2 = 6beta-hydroxylithocholate + oxidized [NADPH--hemoprotein reductase] + H2O + H(+). Catalyzes the 6 beta-hydroxylation of lithocholic acid and steroid hormones. In Mesocricetus auratus (Golden hamster), this protein is Lithocholate 6-beta-hydroxylase (CYP3A10).